Reading from the N-terminus, the 321-residue chain is MRIGQYQLRNRLIAAPMAGITDRPFRTLCYEMGAGLTVSEMMSSNPQVWESDKSRLRMVHVDEPGIRTVQIAGSDPVEMADAARINVESGAQIIDINMGCPAKKVNRKLAGSALLQYPDLVKSILIGVVNAVDVPVTLKIRTGWAPEHRNCVEIAQLAEDCGIQALTIHGRTRACLFNGEAEYDSIRAVKQKVSIPIIANGDITNPHKARAVLDYTGADALMIGRAAQGRPWIFREIQHYLDTGELLPPLPLAEVKRLLCTHVRELHDFYGQAKGYRIARKHVSWYLQEHAPDDQFRRTFNAIEDASEQLEALEAYFENFA.

Residues 16–18 (PMA) and Q70 contribute to the FMN site. Catalysis depends on C100, which acts as the Proton donor. FMN is bound by residues K139, 200 to 202 (NGD), and 224 to 225 (GR).

This sequence belongs to the Dus family. DusB subfamily. The cofactor is FMN.

The catalysed reaction is a 5,6-dihydrouridine in tRNA + NAD(+) = a uridine in tRNA + NADH + H(+). It catalyses the reaction a 5,6-dihydrouridine in tRNA + NADP(+) = a uridine in tRNA + NADPH + H(+). In terms of biological role, catalyzes the synthesis of 5,6-dihydrouridine (D), a modified base found in the D-loop of most tRNAs, via the reduction of the C5-C6 double bond in target uridines. The protein is tRNA-dihydrouridine synthase B of Salmonella typhi.